Here is a 196-residue protein sequence, read N- to C-terminus: Imidazoleglycerol-phosphate dehydratase (196 aa).

It belongs to the imidazoleglycerol-phosphate dehydratase family.

It localises to the cytoplasm. The catalysed reaction is D-erythro-1-(imidazol-4-yl)glycerol 3-phosphate = 3-(imidazol-4-yl)-2-oxopropyl phosphate + H2O. It functions in the pathway amino-acid biosynthesis; L-histidine biosynthesis; L-histidine from 5-phospho-alpha-D-ribose 1-diphosphate: step 6/9. The sequence is that of Imidazoleglycerol-phosphate dehydratase from Desulfitobacterium hafniense (strain Y51).